Reading from the N-terminus, the 287-residue chain is Festuclavine synthase II (287 aa).

This sequence belongs to the fgaFS/easG family.

It carries out the reaction festuclavine + NAD(+) = 6,8-dimethyl-6,7-didehydroergoline + NADH + H(+). The protein operates within alkaloid biosynthesis; ergot alkaloid biosynthesis. In terms of biological role, festuclavine synthase; part of the gene cluster that mediates the biosynthesis of isofumigaclavines, fungal ergot alkaloids. The tryptophan dimethylallyltransferase ifgA catalyzes the first step of ergot alkaloid biosynthesis by condensing dimethylallyl diphosphate (DMAP) and tryptophan to form 4-dimethylallyl-L-tryptophan. The second step is catalyzed by the methyltransferase ifgB that methylates 4-dimethylallyl-L-tryptophan in the presence of S-adenosyl-L-methionine, resulting in the formation of N-methyl-dimethylallyl-L-tryptophan. The catalase ifgD and the FAD-dependent oxidoreductase ifgC then transform N-methyl-dimethylallyl-L-tryptophan to chanoclavine-I which is further oxidized by ifgE in the presence of NAD(+), resulting in the formation of chanoclavine-I aldehyde. The chanoclavine-I aldehyde reductases ifgG and/or fgaOx3 reduce chanoclavine-I aldehyde to dihydrochanoclavine-I aldehyde that spontaneously dehydrates to form 6,8-dimethyl-6,7-didehydroergoline. The festuclavine dehydrogenases ifgF1 and/or ifgF2 then catalyze the reduction of 6,8-dimethyl-6,7-didehydroergoline to form festuclavine. Hydrolysis of festuclavine by a yet undetermined cytochrome P450 monooxygenase (called ifgH) then leads to the formation of isofumigaclavine B which is in turn acetylated by ifgI to isofumigaclavine A. Penicillium roqueforti has interestingly at least two sets of genes for the consumption of chanoclavine-I aldehyde on three different loci, the OYEs ifgG/fgaOx3 and the festuclavine synthase homologs ifgF1/ifgF2. The reason for the duplication of these genes is unclear, probably to ensure the conversion of chanoclavine-I aldehyde by differential gene expression under various environmental conditions. In Penicillium roqueforti (strain FM164), this protein is Festuclavine synthase II.